The chain runs to 442 residues: Tubulin beta chain (442 aa).

Positions 11, 69, 138, 142, 143, 144, 204, and 226 each coordinate GTP. E69 contacts Mg(2+).

This sequence belongs to the tubulin family. Dimer of alpha and beta chains. A typical microtubule is a hollow water-filled tube with an outer diameter of 25 nm and an inner diameter of 15 nM. Alpha-beta heterodimers associate head-to-tail to form protofilaments running lengthwise along the microtubule wall with the beta-tubulin subunit facing the microtubule plus end conferring a structural polarity. Microtubules usually have 13 protofilaments but different protofilament numbers can be found in some organisms and specialized cells. Mg(2+) is required as a cofactor.

The protein localises to the cytoplasm. It is found in the cytoskeleton. In terms of biological role, tubulin is the major constituent of microtubules, a cylinder consisting of laterally associated linear protofilaments composed of alpha- and beta-tubulin heterodimers. Microtubules grow by the addition of GTP-tubulin dimers to the microtubule end, where a stabilizing cap forms. Below the cap, tubulin dimers are in GDP-bound state, owing to GTPase activity of alpha-tubulin. This Trypanosoma cruzi protein is Tubulin beta chain.